The primary structure comprises 349 residues: MSELRGKVQTVLGQIEPDQLGRTMTHEHLTMSFECSHVPPAPGDEGLSLAPIEMKHLHWLQQNPYSHHENLLLNQELEAVKEELLCYRKAGGGTIVENTTTGINRNLPALKQLAKETGVHVIAGAGYYVDVTHSEETRKMTVEKLTDVIVSEVLHGADGTDIRCGVIGEIGTSWPITESEKKVLQATAHAQTRLGCPVIIHPGRDNRAPVEVIRILQEAGGDISKTVMSHLDRSIYDHGELLEFARMGSYLEYDLFGTEVLNYQFNCNVDMPSDSQRVQSLKFLIQEGYEDRILIAHDIHTKHRLTKYGGHGFSHILKNIVPKMLSRGITQNQVDKILIENPKRWLTFK.

The a divalent metal cation site is built by H26, H28, E169, H201, H230, and D298.

It belongs to the metallo-dependent hydrolases superfamily. Phosphotriesterase family. It depends on a divalent metal cation as a cofactor.

The protein localises to the cytoplasm. It is found in the cytosol. The enzyme catalyses N-acetyltaurine + H2O = taurine + acetate. The catalysed reaction is N-propanoyltaurine + H2O = propanoate + taurine. It carries out the reaction N-acetyl-L-methionine + H2O = L-methionine + acetate. It catalyses the reaction N-acetyl-L-isoleucine + H2O = L-isoleucine + acetate. The enzyme catalyses N-acetyl-L-leucine + H2O = L-leucine + acetate. The catalysed reaction is N-acetyl-L-valine + H2O = L-valine + acetate. Functionally, N-acetyltaurine hydrolase that catalyzes the hydrolysis of N-acetyltaurine into taurine and acetate. PTER also acts on other N-acetyl amino acids (Met, Ile, Leu, Val) and N-propionyltaurine, but at lower rates. This is N-acetyltaurine hydrolase (pter) from Danio rerio (Zebrafish).